Reading from the N-terminus, the 507-residue chain is RNA-binding protein MEX3B (507 aa).

Residues 1–22 form a disordered region; it reads MPSSLFADMERNGSGGGGGETL. KH domains lie at 59–120 and 155–216; these read MTEC…RREI and QTTI…REEI. Disordered stretches follow at residues 256 to 279 and 426 to 450; these read NQSS…LGSA and SSSS…GMRR. The span at 426-446 shows a compositional bias: low complexity; it reads SSSSSSSSSSSSSSSSSSSSS. Residues 456–496 form an RING-type zinc finger; it reads CSICFESEVIAALVPCGHNLFCMECANRICEKNQPQCPVCH.

The protein resides in the cytoplasm. Its subcellular location is the nucleus. It localises to the cytoplasmic granule. It is found in the P-body. In terms of biological role, RNA-binding protein. May be involved in post-transcriptional regulatory mechanisms. The protein is RNA-binding protein MEX3B (mex3b) of Xenopus laevis (African clawed frog).